The following is a 224-amino-acid chain: Protein FMP52, mitochondrial (224 aa).

The protein belongs to the FMP52 family.

Its subcellular location is the mitochondrion outer membrane. This chain is Protein FMP52, mitochondrial (FMP52), found in Kluyveromyces lactis (strain ATCC 8585 / CBS 2359 / DSM 70799 / NBRC 1267 / NRRL Y-1140 / WM37) (Yeast).